A 259-amino-acid polypeptide reads, in one-letter code: Thiazole synthase (259 aa).

Catalysis depends on Lys95, which acts as the Schiff-base intermediate with DXP. 1-deoxy-D-xylulose 5-phosphate-binding positions include Gly156, 182-183 (AG), and 204-205 (AS).

The protein belongs to the ThiG family. In terms of assembly, homotetramer. Forms heterodimers with either ThiH or ThiS.

Its subcellular location is the cytoplasm. The catalysed reaction is [ThiS sulfur-carrier protein]-C-terminal-Gly-aminoethanethioate + 2-iminoacetate + 1-deoxy-D-xylulose 5-phosphate = [ThiS sulfur-carrier protein]-C-terminal Gly-Gly + 2-[(2R,5Z)-2-carboxy-4-methylthiazol-5(2H)-ylidene]ethyl phosphate + 2 H2O + H(+). It functions in the pathway cofactor biosynthesis; thiamine diphosphate biosynthesis. Catalyzes the rearrangement of 1-deoxy-D-xylulose 5-phosphate (DXP) to produce the thiazole phosphate moiety of thiamine. Sulfur is provided by the thiocarboxylate moiety of the carrier protein ThiS. In vitro, sulfur can be provided by H(2)S. In Corynebacterium efficiens (strain DSM 44549 / YS-314 / AJ 12310 / JCM 11189 / NBRC 100395), this protein is Thiazole synthase.